A 122-amino-acid chain; its full sequence is Large ribosomal subunit protein uL14 (122 aa).

Belongs to the universal ribosomal protein uL14 family. In terms of assembly, part of the 50S ribosomal subunit. Forms a cluster with proteins L3 and L19. In the 70S ribosome, L14 and L19 interact and together make contacts with the 16S rRNA in bridges B5 and B8.

Binds to 23S rRNA. Forms part of two intersubunit bridges in the 70S ribosome. In Allorhizobium ampelinum (strain ATCC BAA-846 / DSM 112012 / S4) (Agrobacterium vitis (strain S4)), this protein is Large ribosomal subunit protein uL14.